The sequence spans 456 residues: UDP-N-acetylmuramate--L-alanine ligase (456 aa).

Gly118–Thr124 contacts ATP.

This sequence belongs to the MurCDEF family.

The protein resides in the cytoplasm. The catalysed reaction is UDP-N-acetyl-alpha-D-muramate + L-alanine + ATP = UDP-N-acetyl-alpha-D-muramoyl-L-alanine + ADP + phosphate + H(+). It participates in cell wall biogenesis; peptidoglycan biosynthesis. Cell wall formation. This Paenarthrobacter aurescens (strain TC1) protein is UDP-N-acetylmuramate--L-alanine ligase.